The primary structure comprises 762 residues: ABC-type oligopeptide transporter ABCB9 (762 aa).

8 consecutive transmembrane segments (helical) span residues 7 to 27, 47 to 67, 84 to 104, 116 to 136, 181 to 201, 221 to 241, 315 to 335, and 412 to 432; these read VVVTLAFVSTDVGVTTAIYAF, VLDLWAACLYRSCLLLGATIG, LVITLVCLFVGIYAMAKLLLF, FWALFVWTYISLAASFLLWGL, VAFLVAASFFLIVAALGETFL, FTTAVVVVCLLAIGSSLAAGI, VFMFSLSWQLSLVTFMGFPII, and SGLTLLVVQVSILYYGGHLVI. The ABC transmembrane type-1 domain maps to 184–467; it reads LVAASFFLIV…VGSVYSGLMQ (284 aa). The region spanning 500 to 736 is the ABC transporter domain; the sequence is VDFENVTFTY…GGLYAKLVQR (237 aa). 535–542 is an ATP binding site; the sequence is GPSGSGKS.

Belongs to the ABC transporter superfamily. ABCB family. MHC peptide exporter (TC 3.A.1.209) subfamily. Homodimer. Interacts (via TMD0 region) with LAMP1; this interaction strongly stabilizes ABCB9 and protects ABCB9 against lysosomal degradation. Interacts (via TMD0 region) with LAMP2 (isoform LAMP-2B). Interacts (via TMD0) with YIF1B; this interaction allows (but is not essential) the ER-to-Golgi trafficking and strongly depends on a salt bridge within TMD0. As to expression, highly expressed in testis, particularly in the Sertoli cells of the seminiferous tubules, and at moderate levels in brain and spinal cord.

It localises to the lysosome membrane. It carries out the reaction a [oligopeptide](in) + ATP + H2O = a [oligopeptide](out) + ADP + phosphate + H(+). Functionally, ATP-dependent low-affinity peptide transporter which translocates a broad spectrum of peptides from the cytosol to the lysosomal lumen for degradation. Displays a broad peptide length specificity from 6-mer up to at least 59-mer peptides with an optimum of 23-mers. Binds and transports smaller and larger peptides with the same affinity. Favors positively charged, aromatic or hydrophobic residues in the N- and C-terminal positions whereas negatively charged residues as well as asparagine and methionine are not favored. The protein is ABC-type oligopeptide transporter ABCB9 of Mus musculus (Mouse).